Here is a 320-residue protein sequence, read N- to C-terminus: Atrochrysone carboxyl ACP thioesterase (320 aa).

4 residues coordinate Zn(2+): H103, H105, D107, and H108. The active-site Proton donor/acceptor is the D107.

It belongs to the metallo-beta-lactamase superfamily. It depends on Zn(2+) as a cofactor.

The catalysed reaction is atrochrysone carboxyl-[ACP] + H2O = atrochrysone carboxylate + holo-[ACP] + H(+). It functions in the pathway secondary metabolite biosynthesis. Its function is as follows. Atrochrysone carboxyl ACP thioesterase; part of the gene cluster that mediates the biosynthesis of geodin, an intermediate in the biosynthesis of other natural products. The pathway begins with the synthesis of atrochrysone thioester by the polyketide synthase (PKS) gedC. The atrochrysone carboxyl ACP thioesterase gedB then breaks the thioester bond and releases the atrochrysone carboxylic acid from gedC. The atrochrysone carboxylic acid is then converted to atrochrysone which is further transformed into emodinanthrone. The next step is performed by the emodinanthrone oxygenase gedH that catalyzes the oxidation of emodinanthrone to emodin. Emodin O-methyltransferase encoded probably by gedA then catalyzes methylation of the 8-hydroxy group of emodin to form questin. Ring cleavage of questin by questin oxidase gedK leads to desmethylsulochrin via several intermediates including questin epoxide. Another methylation step probably catalyzed by methyltransferase gedG leads to the formation of sulochrin which is further converted to dihydrogeodin by the sulochrin halogenase gedL. Finally, the dihydrogeodin oxidase gedJ catalyzes the stereospecific phenol oxidative coupling reaction converting dihydrogeodin to geodin. This is Atrochrysone carboxyl ACP thioesterase from Aspergillus terreus (strain NIH 2624 / FGSC A1156).